The following is a 311-amino-acid chain: DNA-directed RNA polymerase subunit alpha (311 aa).

Residues 1–228 (MQYQIERIDH…ELFQPLATVT (228 aa)) form an alpha N-terminal domain (alpha-NTD) region. Positions 239–311 (PSPEAQIPLE…ISIPQSRTSV (73 aa)) are alpha C-terminal domain (alpha-CTD).

Belongs to the RNA polymerase alpha chain family. As to quaternary structure, in cyanobacteria the RNAP catalytic core is composed of 2 alpha, 1 beta, 1 beta', 1 gamma and 1 omega subunit. When a sigma factor is associated with the core the holoenzyme is formed, which can initiate transcription.

The enzyme catalyses RNA(n) + a ribonucleoside 5'-triphosphate = RNA(n+1) + diphosphate. Its function is as follows. DNA-dependent RNA polymerase catalyzes the transcription of DNA into RNA using the four ribonucleoside triphosphates as substrates. The sequence is that of DNA-directed RNA polymerase subunit alpha from Prochlorococcus marinus (strain MIT 9312).